The chain runs to 385 residues: MLSLFFNFLTSCLWPSSSTTSHTYSDSKGKQDGLLWYKDSAHHLFGDFSMAVVQANNLLEDQSQVESGPLTTLSSSGPYGTFVGVYDGHGGPETSRFVNDHLFHHLKRFAAEQDSMSVDVIRKAYEATEEGFLGVVAKQWAVKPHIAAVGSCCLIGVVCDGKLYVANVGDSRAVLGKVIKATGEVNALQLSAEHNVSIESVRQEMHSLHPDDSHIVVLKHNVWRVKGIIQVSRSIGDVYLKKSEFNKEPLYTKYRLREPMKRPILSWEPSITVHDLQPDDQFLIFASDGLWEQLSNQEAVEIVQNHPRNGIARRLVKAALQEAAKKREMRYSDLNKIERGVRRHFHDDITVVVLFLDTNLLSRASSLKTPSVSIRGGGITLPKKL.

An N-terminal signal peptide occupies residues 1-18 (MLSLFFNFLTSCLWPSSS). The PPM-type phosphatase domain maps to 47–356 (DFSMAVVQAN…DDITVVVLFL (310 aa)). At Ser-76 the chain carries Phosphoserine. The Mn(2+) site is built by Asp-87, Gly-88, Asp-288, and Asp-347.

It belongs to the PP2C family. Mg(2+) is required as a cofactor. It depends on Mn(2+) as a cofactor.

It carries out the reaction O-phospho-L-seryl-[protein] + H2O = L-seryl-[protein] + phosphate. The catalysed reaction is O-phospho-L-threonyl-[protein] + H2O = L-threonyl-[protein] + phosphate. In terms of biological role, may dephosphorylate and repress plasma membrane H(+)-ATPases (PM H(+)-ATPases, e.g. AHA1 and AHA2), thus influencing negatively plant growth and fitness. This Arabidopsis thaliana (Mouse-ear cress) protein is Probable protein phosphatase 2C 79.